The following is a 428-amino-acid chain: Glucose-1-phosphate adenylyltransferase (428 aa).

Alpha-D-glucose 1-phosphate-binding positions include Tyr-114, Gly-179, 194-195 (EK), and Ser-212.

Belongs to the bacterial/plant glucose-1-phosphate adenylyltransferase family. Homotetramer.

The enzyme catalyses alpha-D-glucose 1-phosphate + ATP + H(+) = ADP-alpha-D-glucose + diphosphate. Its pathway is glycan biosynthesis; glycogen biosynthesis. In terms of biological role, involved in the biosynthesis of ADP-glucose, a building block required for the elongation reactions to produce glycogen. Catalyzes the reaction between ATP and alpha-D-glucose 1-phosphate (G1P) to produce pyrophosphate and ADP-Glc. This chain is Glucose-1-phosphate adenylyltransferase, found in Yersinia pseudotuberculosis serotype IB (strain PB1/+).